We begin with the raw amino-acid sequence, 307 residues long: Alpha N-terminal protein methyltransferase 1 (307 aa).

Residues 38–51 (EPAPAPAAGSNGVA) show a composition bias toward low complexity. Residues 38-60 (EPAPAPAAGSNGVAGEEEAGGGG) are disordered. Residues G123, R128, 145 to 147 (EPV), 179 to 180 (LQ), and Q195 contribute to the S-adenosyl-L-methionine site.

The protein belongs to the methyltransferase superfamily. NTM1 family.

The enzyme catalyses N-terminal L-alanyl-L-prolyl-L-lysyl-[protein] + 3 S-adenosyl-L-methionine = N-terminal N,N,N-trimethyl-L-alanyl-L-prolyl-L-lysyl-[protein] + 3 S-adenosyl-L-homocysteine + 3 H(+). The catalysed reaction is N-terminal L-seryl-L-prolyl-L-lysyl-[protein] + 3 S-adenosyl-L-methionine = N-terminal N,N,N-trimethyl-L-seryl-L-prolyl-L-lysyl-[protein] + 3 S-adenosyl-L-homocysteine + 3 H(+). It catalyses the reaction N-terminal L-prolyl-L-prolyl-L-lysyl-[protein] + 2 S-adenosyl-L-methionine = N-terminal N,N-dimethyl-L-prolyl-L-prolyl-L-lysyl-[protein] + 2 S-adenosyl-L-homocysteine + 2 H(+). In terms of biological role, alpha-N-methyltransferase that methylates the N-terminus of target proteins containing the N-terminal motif [Ala/Pro/Ser]-Pro-Lys when the initiator Met is cleaved. Specifically catalyzes mono-, di- or tri-methylation of exposed alpha-amino group of Ala or Ser residue in the [Ala/Ser]-Pro-Lys motif and mono- or di-methylation of Pro in the Pro-Pro-Lys motif. This is Alpha N-terminal protein methyltransferase 1 from Oryza sativa subsp. japonica (Rice).